Consider the following 55-residue polypeptide: Large ribosomal subunit protein bL33 (55 aa).

This sequence belongs to the bacterial ribosomal protein bL33 family.

This is Large ribosomal subunit protein bL33 from Wigglesworthia glossinidia brevipalpis.